A 279-amino-acid polypeptide reads, in one-letter code: Ribosomal RNA small subunit methyltransferase A (279 aa).

6 residues coordinate S-adenosyl-L-methionine: Asn-27, Leu-29, Gly-54, Glu-76, Asp-102, and Asn-127.

It belongs to the class I-like SAM-binding methyltransferase superfamily. rRNA adenine N(6)-methyltransferase family. RsmA subfamily.

The protein localises to the cytoplasm. It carries out the reaction adenosine(1518)/adenosine(1519) in 16S rRNA + 4 S-adenosyl-L-methionine = N(6)-dimethyladenosine(1518)/N(6)-dimethyladenosine(1519) in 16S rRNA + 4 S-adenosyl-L-homocysteine + 4 H(+). Specifically dimethylates two adjacent adenosines (A1518 and A1519) in the loop of a conserved hairpin near the 3'-end of 16S rRNA in the 30S particle. May play a critical role in biogenesis of 30S subunits. This is Ribosomal RNA small subunit methyltransferase A from Mesorhizobium japonicum (strain LMG 29417 / CECT 9101 / MAFF 303099) (Mesorhizobium loti (strain MAFF 303099)).